The following is a 75-amino-acid chain: Phi-liotoxin-Lw1a (75 aa).

An N-terminal signal peptide occupies residues 1–25 (MNFATKVSLLLLAIAVIVIVEGGEG). The propeptide occupies 26-39 (DSWFEEHEESDTER). Cystine bridges form between Cys-50-Cys-62 and Cys-56-Cys-68.

In terms of tissue distribution, expressed by the venom gland.

It localises to the secreted. Functionally, affects the activity of both ryanodine-sensitive calcium-release channels RyR1 and RyR2 with high potency. At lower concentrations the toxin increases full openings of the RyRs, and at higher concentrations it inhibits full openings and induce openings to subconductance levels and reduces the number of full conductance openings. The different actions may be attributed to the toxins binding at different sites on the RyRs, with binding at a high-affinity site mediating the increase in full openings and the induction of subconductance states evoked upon binding to a lower-affinity site. Insect-selective toxin that provokes a dose-dependent contractile paralysis in crickets and blowfly larvae, followed by death. The sequence is that of Phi-liotoxin-Lw1a from Hormurus waigiensis (Australian rainforest scorpion).